The primary structure comprises 253 residues: Tetraspanin-11 (253 aa).

Helical transmembrane passes span 19-39, 63-83, and 93-113; these read LLFIFNFFFWVGGAAVMAVGI, ILIFVGGLVMTTGFLGFGAII, and YFCLLLVIFLVELVAGVLAHV. An N-linked (GlcNAc...) asparagine glycan is attached at asparagine 127. A helical membrane pass occupies residues 220–240; it reads LLLMGAVGIGVACLQICGMVL.

The protein belongs to the tetraspanin (TM4SF) family.

It is found in the membrane. This is Tetraspanin-11 (Tspan11) from Mus musculus (Mouse).